Here is a 365-residue protein sequence, read N- to C-terminus: 3-dehydroquinate synthase (365 aa).

Residues 106–110 (GVIGD), 130–131 (TT), lysine 142, lysine 151, and 169–172 (FFAT) each bind NAD(+). Zn(2+) contacts are provided by glutamate 184, histidine 247, and histidine 264.

The protein belongs to the sugar phosphate cyclases superfamily. Dehydroquinate synthase family. NAD(+) serves as cofactor. Co(2+) is required as a cofactor. Requires Zn(2+) as cofactor.

It localises to the cytoplasm. It carries out the reaction 7-phospho-2-dehydro-3-deoxy-D-arabino-heptonate = 3-dehydroquinate + phosphate. It functions in the pathway metabolic intermediate biosynthesis; chorismate biosynthesis; chorismate from D-erythrose 4-phosphate and phosphoenolpyruvate: step 2/7. Functionally, catalyzes the conversion of 3-deoxy-D-arabino-heptulosonate 7-phosphate (DAHP) to dehydroquinate (DHQ). The chain is 3-dehydroquinate synthase from Listeria innocua serovar 6a (strain ATCC BAA-680 / CLIP 11262).